We begin with the raw amino-acid sequence, 293 residues long: Aspartate carbamoyltransferase catalytic subunit (293 aa).

Arg50 and Thr51 together coordinate carbamoyl phosphate. Lys78 serves as a coordination point for L-aspartate. Positions 100, 127, and 130 each coordinate carbamoyl phosphate. L-aspartate is bound by residues Arg160 and Arg210. Ala253 and Pro254 together coordinate carbamoyl phosphate.

It belongs to the aspartate/ornithine carbamoyltransferase superfamily. ATCase family. In terms of assembly, heterododecamer (2C3:3R2) of six catalytic PyrB chains organized as two trimers (C3), and six regulatory PyrI chains organized as three dimers (R2).

It catalyses the reaction carbamoyl phosphate + L-aspartate = N-carbamoyl-L-aspartate + phosphate + H(+). Its pathway is pyrimidine metabolism; UMP biosynthesis via de novo pathway; (S)-dihydroorotate from bicarbonate: step 2/3. Its function is as follows. Catalyzes the condensation of carbamoyl phosphate and aspartate to form carbamoyl aspartate and inorganic phosphate, the committed step in the de novo pyrimidine nucleotide biosynthesis pathway. In Staphylococcus epidermidis (strain ATCC 12228 / FDA PCI 1200), this protein is Aspartate carbamoyltransferase catalytic subunit.